We begin with the raw amino-acid sequence, 453 residues long: Homogentisate 1,2-dioxygenase (453 aa).

The span at 1 to 12 shows a compositional bias: basic and acidic residues; that stretch reads MLEKAERQRKAA. The segment at 1-43 is disordered; that stretch reads MLEKAERQRKAAPDQQRSAGYMPGFGNDFETESLPGSLPQGQN. His306 (proton acceptor) is an active-site residue. Fe cation contacts are provided by His349 and Glu355. Residues Tyr364 and His385 each contribute to the homogentisate site. Residue His385 participates in Fe cation binding.

It belongs to the homogentisate dioxygenase family. In terms of assembly, hexamer; dimer of trimers. It depends on Fe cation as a cofactor.

The enzyme catalyses homogentisate + O2 = 4-maleylacetoacetate + H(+). The protein operates within amino-acid degradation; L-phenylalanine degradation; acetoacetate and fumarate from L-phenylalanine: step 4/6. Its function is as follows. Involved in the catabolism of homogentisate (2,5-dihydroxyphenylacetate or 2,5-OH-PhAc), a central intermediate in the degradation of phenylalanine and tyrosine. Catalyzes the oxidative ring cleavage of the aromatic ring of homogentisate to yield maleylacetoacetate. The chain is Homogentisate 1,2-dioxygenase from Sinorhizobium medicae (strain WSM419) (Ensifer medicae).